We begin with the raw amino-acid sequence, 442 residues long: Limonoid 1-O-acetyltransferse (442 aa).

Active-site proton acceptor residues include His155 and Asp381.

This sequence belongs to the plant acyltransferase family. Monomer.

The catalysed reaction is (1S)-1-hydroxy-luvungin A + acetyl-CoA = (1S)-1-acetoxy-luvungin A + CoA. The protein operates within secondary metabolite biosynthesis; terpenoid biosynthesis. Its function is as follows. Acetyltransferase involved in the biosynthesis of limonoids triterpene natural products such as limonin, a compound with insecticidal activity responsible for the bitter taste in citrus. Catalyzes the formation of (1S)-1-acetoxy-luvungin A from (1S)-1-hydroxy-luvungin A. This Citrus sinensis (Sweet orange) protein is Limonoid 1-O-acetyltransferse.